The sequence spans 628 residues: Vacuolar-sorting receptor 3 (628 aa).

The first 24 residues, Met-1 to Ala-24, serve as a signal peptide directing secretion. Topologically, residues Arg-25 to Ala-569 are lumenal. The PA domain maps to Gln-56–Ile-168. N-linked (GlcNAc...) asparagine glycosylation is found at Asn-148, Asn-294, and Asn-434. 2 EGF-like domains span residues Glu-416 to Glu-466 and Gly-469 to Glu-516. 7 disulfide bridges follow: Cys-420–Cys-438, Cys-427–Cys-447, Cys-449–Cys-465, Cys-473–Cys-493, Cys-480–Cys-501, Cys-503–Cys-515, and Cys-545–Cys-558. The 43-residue stretch at Asp-517 to Ile-559 folds into the EGF-like 3; calcium-binding domain. The chain crosses the membrane as a helical span at residues Trp-570–Val-590. Topologically, residues Tyr-591 to Ala-628 are cytoplasmic. The Tyrosine-based internalization motif signature appears at Tyr-610 to Leu-613.

The protein belongs to the VSR (BP-80) family. In terms of tissue distribution, expressed in seeds, seedlings, roots, leaves, flowers and siliques.

The protein resides in the membrane. Its subcellular location is the golgi apparatus membrane. It localises to the cytoplasmic vesicle. The protein localises to the clathrin-coated vesicle membrane. It is found in the prevacuolar compartment membrane. Functionally, vacuolar-sorting receptor (VSR) involved in clathrin-coated vesicles sorting from Golgi apparatus to vacuoles. This is Vacuolar-sorting receptor 3 (VSR3) from Arabidopsis thaliana (Mouse-ear cress).